Here is a 244-residue protein sequence, read N- to C-terminus: MPKNTLHIKNIDIQTTHIMLKTDINCDIKPFIQNQREIILNEIKENPNFLKSYTPIPLIDKKPILKLMTKAGEIANTGPMAAVAGSISEMCLDYLESFKSKFSIVENGGDIALKTNKKINMGIYAGKTSFSYNYGFKIKPKPYKYGICTSSYDGPSKSFGSTDATIVFSKQSSIADSLATSIGNYGNGNTENEVVHNALSYAEKYSDYYEGVLVIKGETLGKTGHIPQLISINNTHVKEAFEIE.

The protein belongs to the UPF0280 family.

This chain is UPF0280 protein Msp_1322, found in Methanosphaera stadtmanae (strain ATCC 43021 / DSM 3091 / JCM 11832 / MCB-3).